Consider the following 96-residue polypeptide: Conantokin Rl-B (96 aa).

Residues 1–21 (MQLYTYLYLLVPLVTFHLILG) form the signal peptide. Residues 22–78 (TGTLDHGDALTERRSTDATALKPEPVLLQKSSARSTNDNGKDTQMKRILKKRGNKAR) constitute a propeptide that is removed on maturation. The interval 51–96 (KSSARSTNDNGKDTQMKRILKKRGNKARGEEELAEKAPEFARELAN) is disordered. A compositionally biased stretch (basic and acidic residues) spans 77 to 96 (ARGEEELAEKAPEFARELAN). E81 contacts a divalent metal cation. 3 positions are modified to 4-carboxyglutamate: E81, E82, and E85. Residue E85 participates in a divalent metal cation binding. Position 88 is a 4-hydroxyproline (P88). Residues E89 and E93 each coordinate a divalent metal cation. E89 and E93 each carry 4-carboxyglutamate. N96 is modified (asparagine amide).

It belongs to the conotoxin B superfamily. The cofactor is Ca(2+). It depends on Mg(2+) as a cofactor. Hydroxylation of Pro-88 is important for NR2B/GRIN2B NMDA receptor selectivity. Removal of hydroxylation does not change global NMDA receptor antagonism (tested on WT neurons), but it decreases the inhibitory potency on NR2B/GRIN2B NMDA receptors and increases the inhibitory potency on NR2A/GRIN2A NMDA receptors. Hydroxylation of Pro-88 locally disrupts a small region of the divalent cation-induced alpha-helix but does not destabilize the entire helix. Expressed by the venom duct.

It localises to the secreted. In terms of biological role, conantokins inhibit N-methyl-D-aspartate (NMDA) receptors. This toxin has antagonist activity on the NR2B/GRIN2B subunit (IC(50)=0.1 uM). In vivo, when delivered into the brain, is active has anticonvulsant activity in the model of epilepsy in mice. This chain is Conantokin Rl-B, found in Conus rolani (Cone snail).